A 125-amino-acid polypeptide reads, in one-letter code: Small ribosomal subunit protein eS26 (125 aa).

Belongs to the eukaryotic ribosomal protein eS26 family.

The polypeptide is Small ribosomal subunit protein eS26 (RPS26) (Sterkiella nova (Ciliate)).